An 806-amino-acid chain; its full sequence is SH3-containing GRB2-like protein 3-interacting protein 1 (806 aa).

2 disordered regions span residues 1-115 (MMEG…ESHK) and 142-278 (SIGN…QAAT). Basic and acidic residues-rich tracts occupy residues 16–32 (RKKEKDTDSTGSPDRDG) and 40–54 (PPYHSKAECAREGGK). Residues S78, S104, S105, S107, S149, S151, S156, and S169 each carry the phosphoserine modification. A phosphothreonine mark is found at T180 and T182. 2 positions are modified to phosphoserine: S236 and F243. Positions 245 to 260 (TGTPPPLPPKTVPATP) are enriched in pro residues. A phosphothreonine mark is found at T247 and T259. Residues S265, D274, S287, S289, S300, S316, and S319 each carry the phosphoserine modification. Over residues 265–276 (SPLTVATGNDQA) the composition is skewed to polar residues. Residues 315–324 (FSDASPEHVT) show a composition bias toward basic and acidic residues. Residues 315-533 (FSDASPEHVT…SRGPSPLTMG (219 aa)) are disordered. T324, T328, and T335 each carry phosphothreonine. The segment covering 335–345 (TPPAASDIPAD) has biased composition (low complexity). A338 carries the phosphoserine modification. Over residues 346 to 369 (SPAPAPPGPTGSAGPPGPPGPRHV) the composition is skewed to pro residues. S371 carries the post-translational modification Phosphoserine. Over residues 377–392 (EVQKKVAEQTFIKDDY) the composition is skewed to basic and acidic residues. S398 bears the Phosphoserine mark. T409 bears the Phosphothreonine mark. The segment covering 436–453 (TSGASSPARPATPLVPCS) has biased composition (low complexity). Residues 454–473 (TTPPPPPPRPPSRPKLPPGK) show a composition bias toward pro residues. Low complexity-rich tracts occupy residues 480 to 490 (SRPFSPPIHSS) and 497 to 520 (PLARAESTSSISSTNSLSAATTPT). S484, S505, and G533 each carry phosphoserine. An MHD domain is found at 537–805 (TLPVAAAFTE…RFAAGKYLAD (269 aa)). Interaction with DPF motifs-containing proteins regions lie at residues 539 to 545 (PVAAAFT), 571 to 573 (SFP), 645 to 648 (TYYN), and 791 to 796 (SLIKKR). The interval 627-806 (MPNLMTHLKK…FAAGKYLADN (180 aa)) is necessary and sufficient to mediate interaction with CANX.

In terms of assembly, interacts with proteins essential or regulating the formation of functional clathrin-coated pits. Interacts with CANX. Interacts with AP2A1. Interacts with EPS15. Interacts with SH3GL3. Interacts with AMPH. Interacts with ITSN1 (via SH3 domains). Interacts with and REPS1. Detected in brain, spinal cord and cerebellum.

Its subcellular location is the membrane. It is found in the clathrin-coated pit. Its function is as follows. May function in clathrin-mediated endocytosis. Has both a membrane binding/tubulating activity and the ability to recruit proteins essential to the formation of functional clathrin-coated pits. Has a preference for membranes enriched in phosphatidylserine and phosphoinositides and is required for the endocytosis of the transferrin receptor. May also bind tubulin. May play a role in the regulation of energy homeostasis. The polypeptide is SH3-containing GRB2-like protein 3-interacting protein 1 (Sgip1) (Mus musculus (Mouse)).